The primary structure comprises 20 residues: Superoxide dismutase [Mn], mitochondrial (20 aa).

This sequence belongs to the iron/manganese superoxide dismutase family. As to quaternary structure, homotetramer. The cofactor is Mn(2+).

The protein resides in the mitochondrion matrix. It catalyses the reaction 2 superoxide + 2 H(+) = H2O2 + O2. Its function is as follows. Destroys superoxide anion radicals which are normally produced within the cells and which are toxic to biological systems. The sequence is that of Superoxide dismutase [Mn], mitochondrial (SODA) from Hordeum vulgare (Barley).